A 382-amino-acid chain; its full sequence is Methylthioribose-1-phosphate isomerase (382 aa).

Aspartate 257 functions as the Proton donor in the catalytic mechanism.

Belongs to the eIF-2B alpha/beta/delta subunits family. MtnA subfamily.

The protein resides in the cytoplasm. Its subcellular location is the nucleus. The enzyme catalyses 5-(methylsulfanyl)-alpha-D-ribose 1-phosphate = 5-(methylsulfanyl)-D-ribulose 1-phosphate. It participates in amino-acid biosynthesis; L-methionine biosynthesis via salvage pathway; L-methionine from S-methyl-5-thio-alpha-D-ribose 1-phosphate: step 1/6. Catalyzes the interconversion of methylthioribose-1-phosphate (MTR-1-P) into methylthioribulose-1-phosphate (MTRu-1-P). This is Methylthioribose-1-phosphate isomerase from Paracoccidioides brasiliensis (strain Pb18).